The sequence spans 310 residues: O-acetylserine sulfhydrylase (310 aa).

Lys44 is modified (N6-(pyridoxal phosphate)lysine). Pyridoxal 5'-phosphate-binding positions include Asn74, Gly178–Thr182, and Ser266.

The protein belongs to the cysteine synthase/cystathionine beta-synthase family. As to quaternary structure, homodimer. Requires pyridoxal 5'-phosphate as cofactor.

The enzyme catalyses O-acetyl-L-serine + hydrogen sulfide = L-cysteine + acetate. It functions in the pathway amino-acid biosynthesis; L-cysteine biosynthesis; L-cysteine from L-serine: step 2/2. In terms of biological role, catalyzes the conversion of O-acetylserine (OAS) to cysteine through the elimination of acetate and addition of hydrogen sulfide. This is O-acetylserine sulfhydrylase (cysK) from Mycobacterium bovis (strain ATCC BAA-935 / AF2122/97).